The sequence spans 218 residues: Protein-methionine-sulfoxide reductase heme-binding subunit MsrQ (218 aa).

Transmembrane regions (helical) follow at residues 12-32, 82-102, 118-138, 150-170, and 180-200; these read TLIK…LALF, MLGL…LWFD, PFIT…ITST, WQWL…HYWW, and QPII…FWAW.

This sequence belongs to the MsrQ family. As to quaternary structure, heterodimer of a catalytic subunit (MsrP) and a heme-binding subunit (MsrQ). Requires FMN as cofactor. It depends on heme b as a cofactor.

The protein localises to the cell inner membrane. Part of the MsrPQ system that repairs oxidized periplasmic proteins containing methionine sulfoxide residues (Met-O), using respiratory chain electrons. Thus protects these proteins from oxidative-stress damage caused by reactive species of oxygen and chlorine generated by the host defense mechanisms. MsrPQ is essential for the maintenance of envelope integrity under bleach stress, rescuing a wide series of structurally unrelated periplasmic proteins from methionine oxidation. MsrQ provides electrons for reduction to the reductase catalytic subunit MsrP, using the quinone pool of the respiratory chain. The protein is Protein-methionine-sulfoxide reductase heme-binding subunit MsrQ of Herminiimonas arsenicoxydans.